Consider the following 97-residue polypeptide: Large ribosomal subunit protein bL27 (97 aa).

Positions 14–36 are disordered; sequence HKKGGGSTSNGRDSQAKRLGAKA.

It belongs to the bacterial ribosomal protein bL27 family.

In Streptococcus sanguinis (strain SK36), this protein is Large ribosomal subunit protein bL27.